A 361-amino-acid polypeptide reads, in one-letter code: G2/mitotic-specific cyclin-B1 (361 aa).

Residues 1–13 (MLRATNNRRTSNN) show a composition bias toward polar residues. Positions 1–33 (MLRATNNRRTSNNVEKDSLQMAKHGNGPLKPVN) are disordered.

This sequence belongs to the cyclin family. Cyclin AB subfamily. Interacts with the CDK1 protein kinase to form a serine/threonine kinase holoenzyme complex also known as maturation promoting factor (MPF). The cyclin subunit imparts substrate specificity to the complex. Interacts with E3 ubiquitin-protein ligase etc-1. Ubiquitinated by etc-1 likely during meiosis, resulting in its degradation.

The protein resides in the cytoplasm. Essential for the control of the cell cycle at the G2/M (mitosis) transition. This chain is G2/mitotic-specific cyclin-B1 (cyb-1), found in Caenorhabditis elegans.